The sequence spans 270 residues: Chlorophyll a-b binding protein 7, chloroplastic (270 aa).

Residues 1-42 (MASACASSTIAAVAFSSPSSRRNGSIVGTTKASFLGGRRLRV) constitute a chloroplast transit peptide. Residue Trp68 participates in chlorophyll b binding. Phe88, Glu107, and His110 together coordinate chlorophyll a. Arg112 contributes to the chlorophyll b binding site. A helical transmembrane segment spans residues 113–133 (WAMLGAAGIFIPELLTKIGIL). Gln144 contributes to the chlorophyll a binding site. Residues 146 to 166 (YFTDTTTLFIVELVLIGWAEG) form a helical membrane-spanning segment. Ile155, Glu165, and Arg168 together coordinate chlorophyll b. 6 residues coordinate chlorophyll a: Lys221, Glu222, Asn225, Arg227, Gln239, and His254. A helical transmembrane segment spans residues 228–248 (LAMLAVMGAWFQHIYTGTGPI).

This sequence belongs to the light-harvesting chlorophyll a/b-binding (LHC) protein family. As to quaternary structure, the LHC complex consists of chlorophyll a-b binding proteins. Binds at least 14 chlorophylls (8 Chl-a and 6 Chl-b) and carotenoids such as lutein and neoxanthin. is required as a cofactor. Photoregulated by reversible phosphorylation of its threonine residues.

The protein resides in the plastid. Its subcellular location is the chloroplast thylakoid membrane. In terms of biological role, the light-harvesting complex (LHC) functions as a light receptor, it captures and delivers excitation energy to photosystems with which it is closely associated. The chain is Chlorophyll a-b binding protein 7, chloroplastic (CAB7) from Solanum lycopersicum (Tomato).